The chain runs to 263 residues: 3-methyl-2-oxobutanoate hydroxymethyltransferase (263 aa).

2 residues coordinate Mg(2+): Asp45 and Asp84. Residues 45–46, Asp84, and Lys112 contribute to the 3-methyl-2-oxobutanoate site; that span reads DS. Position 114 (Glu114) interacts with Mg(2+). Catalysis depends on Glu180, which acts as the Proton acceptor.

The protein belongs to the PanB family. In terms of assembly, homodecamer; pentamer of dimers. Mg(2+) is required as a cofactor.

The protein resides in the cytoplasm. The catalysed reaction is 3-methyl-2-oxobutanoate + (6R)-5,10-methylene-5,6,7,8-tetrahydrofolate + H2O = 2-dehydropantoate + (6S)-5,6,7,8-tetrahydrofolate. The protein operates within cofactor biosynthesis; (R)-pantothenate biosynthesis; (R)-pantoate from 3-methyl-2-oxobutanoate: step 1/2. Functionally, catalyzes the reversible reaction in which hydroxymethyl group from 5,10-methylenetetrahydrofolate is transferred onto alpha-ketoisovalerate to form ketopantoate. This Salmonella agona (strain SL483) protein is 3-methyl-2-oxobutanoate hydroxymethyltransferase.